We begin with the raw amino-acid sequence, 602 residues long: Sulfite reductase [NADPH] hemoprotein beta-component (602 aa).

Basic and acidic residues predominate over residues 1–15 (MDDHKTASPPRERSY). The tract at residues 1–24 (MDDHKTASPPRERSYETPPAERPI) is disordered. Residues cysteine 458, cysteine 464, cysteine 503, and cysteine 507 each contribute to the [4Fe-4S] cluster site. Cysteine 507 is a binding site for siroheme.

It belongs to the nitrite and sulfite reductase 4Fe-4S domain family. As to quaternary structure, alpha(8)-beta(8). The alpha component is a flavoprotein, the beta component is a hemoprotein. Siroheme is required as a cofactor. The cofactor is [4Fe-4S] cluster.

It catalyses the reaction hydrogen sulfide + 3 NADP(+) + 3 H2O = sulfite + 3 NADPH + 4 H(+). The protein operates within sulfur metabolism; hydrogen sulfide biosynthesis; hydrogen sulfide from sulfite (NADPH route): step 1/1. In terms of biological role, component of the sulfite reductase complex that catalyzes the 6-electron reduction of sulfite to sulfide. This is one of several activities required for the biosynthesis of L-cysteine from sulfate. The chain is Sulfite reductase [NADPH] hemoprotein beta-component from Methylobacterium nodulans (strain LMG 21967 / CNCM I-2342 / ORS 2060).